The primary structure comprises 285 residues: Para-Rep C6 (285 aa).

The CRESS-DNA virus Rep endonuclease domain occupies 3 to 99 (TRQSTSWVFT…VAGPWEYGLF (97 aa)). The short motif at 10 to 13 (VFTL) is the RCR-1 element. Residues Glu36 and His42 each contribute to the a divalent metal cation site. The RCR-2 signature appears at 42 to 44 (HLQ). The Nuclear localization signal signature appears at 52-74 (RNTTLRQAKYIFNGLNPHLEIAR). The active-site For DNA cleavage activity is the Tyr82. Positions 82–85 (YAMK) match the RCR-3 motif. Asp87 provides a ligand contact to a divalent metal cation. Residues 99–105 (FIKRGSH) carry the Nuclear localization signal motif. 175-183 (GPAGNEGKS) contacts ATP.

It belongs to the nanoviridea/circoviridae replication-associated protein family. In terms of assembly, homooligomer (Potential). Rep binds to repeated DNA motifs (iterons). Mg(2+) serves as cofactor. Mn(2+) is required as a cofactor.

The protein localises to the host nucleus. It catalyses the reaction ATP + H2O = ADP + phosphate + H(+). Its function is as follows. Initiates and terminates the replication only of its own subviral DNA molecule. The closed circular ssDNA genome is first converted to a superhelical dsDNA. Rep binds a specific hairpin at the genome origin of replication. Introduces an endonucleolytic nick within the intergenic region of the genome, thereby initiating the rolling circle replication (RCR). Following cleavage, binds covalently to the 5'-phosphate of DNA as a tyrosyl ester. The cleavage gives rise to a free 3'-OH that serves as a primer for the cellular DNA polymerase. The polymerase synthesizes the (+) strand DNA by rolling circle mechanism. After one round of replication, a Rep-catalyzed nucleotidyl transfer reaction releases a circular single-stranded virus genome, thereby terminating the replication. Displays origin-specific DNA cleavage, nucleotidyl transferase, ATPase and helicase activities. The chain is Para-Rep C6 (C6) from Subterranean clover stunt C6 alphasatellite (SCSC6A).